The following is a 225-amino-acid chain: Uracil-DNA glycosylase 1 (225 aa).

D68 (proton acceptor) is an active-site residue.

This sequence belongs to the uracil-DNA glycosylase (UDG) superfamily. UNG family.

Its subcellular location is the cytoplasm. The enzyme catalyses Hydrolyzes single-stranded DNA or mismatched double-stranded DNA and polynucleotides, releasing free uracil.. In terms of biological role, excises uracil residues from the DNA which can arise as a result of misincorporation of dUMP residues by DNA polymerase or due to deamination of cytosine. The protein is Uracil-DNA glycosylase 1 (ung1) of Streptomyces coelicolor (strain ATCC BAA-471 / A3(2) / M145).